The primary structure comprises 170 residues: Peptide deformylase-like (170 aa).

Residue glutamate 139 is part of the active site.

This sequence belongs to the polypeptide deformylase family.

The polypeptide is Peptide deformylase-like (Bradyrhizobium diazoefficiens (strain JCM 10833 / BCRC 13528 / IAM 13628 / NBRC 14792 / USDA 110)).